The sequence spans 266 residues: SQVGMVLNLDKCIGCHTCSVTCKEGMEYAWFNNVESKLCEHCLNPACVATCPSGAIYKREEDGIVLIDQDKLCISGCPYKCIFCYPRIESGQPTVCSETCVGRYLGVLLYDADRIEEAASTEHETDLLYERQLDVFLDPNDPKVIEQAIKQGIPQNVIDAAQRSPVYKLALPLHPEYRAADAGELGSNGILPDVESLRMLSAGDTGPVIRSQTVEGVTDTRALEEVGLTEAQAQEMYRYLAIANYEDRFVVPSSHRIDAINITEVR.

2 4Fe-4S ferredoxin-type domains span residues 3-32 and 30-61; these read VGMVLNLDKCIGCHTCSVTCKEGMEYAWFN and WFNNVESKLCEHCLNPACVATCPSGAIYKREE. [4Fe-4S] cluster-binding residues include C12, C15, C18, C22, C39, C42, and C47. 2 residues coordinate [3Fe-4S] cluster: C51 and C73. Positions 77, 81, 84, 96, and 100 each coordinate [4Fe-4S] cluster.

Heterotrimer composed of an alpha, a beta and a gamma chain. Alpha and beta are catalytic chains; gamma chains are involved in binding the enzyme complex to the cytoplasmic membrane. It depends on [4Fe-4S] cluster as a cofactor. [3Fe-4S] cluster is required as a cofactor.

The protein resides in the cell membrane. The protein localises to the cytoplasm. The catalysed reaction is nitrate + a quinol = a quinone + nitrite + H2O. Its activity is regulated as follows. Inhibited by micromolar concentrations of azide. In terms of biological role, the nitrate reductase enzyme complex allows Bradyrhizobium sp. USDA 3045 to use nitrate as an electron acceptor during anaerobic growth. The beta chain is an electron transfer unit containing four cysteine clusters involved in the formation of iron-sulfur centers. Electrons are transferred from the gamma chain to the molybdenum cofactor of the alpha subunit. This Bradyrhizobium sp protein is Respiratory nitrate reductase beta chain (narH).